Reading from the N-terminus, the 347-residue chain is Haptoglobin (347 aa).

The N-terminal stretch at 1–18 is a signal peptide; it reads MRALGAVVTLLLWGQLFA. Residues 31–88 form the Sushi domain; it reads DSCPKPPEIANGYVEHLVRYRCRQFYRLRTEGDGVYTLNDEKQWVNTAAGEKLPECEA. 4 disulfides stabilise this stretch: Cys-52-Cys-86, Cys-90-Cys-207, Cys-250-Cys-281, and Cys-292-Cys-322. Residues 103–345 form the Peptidase S1 domain; that stretch reads IIGGSMDAKG…LKDWVQETMA (243 aa). N-linked (GlcNAc...) asparagine glycans are attached at residues Asn-148, Asn-182, Asn-256, and Asn-264. The segment at 259–264 is interaction with CD163; that stretch reads VPEKKN.

Belongs to the peptidase S1 family. As to quaternary structure, tetramer of two alpha and two beta chains; disulfide-linked. The hemoglobin/haptoglobin complex is composed of a haptoglobin dimer bound to two hemoglobin alpha-beta dimers. Interacts with CD163. Interacts with ERGIC3. Expressed by the liver and secreted in plasma.

It is found in the secreted. Functionally, as a result of hemolysis, hemoglobin is found to accumulate in the kidney and is secreted in the urine. Haptoglobin captures, and combines with free plasma hemoglobin to allow hepatic recycling of heme iron and to prevent kidney damage. Haptoglobin also acts as an antioxidant, has antibacterial activity and plays a role in modulating many aspects of the acute phase response. Hemoglobin/haptoglobin complexes are rapidly cleared by the macrophage CD163 scavenger receptor expressed on the surface of liver Kupfer cells through an endocytic lysosomal degradation pathway. This chain is Haptoglobin (Hp), found in Mus saxicola (Brown spiny mouse).